A 697-amino-acid chain; its full sequence is Polyribonucleotide nucleotidyltransferase (697 aa).

Residues Asp-488 and Asp-494 each contribute to the Mg(2+) site. Residues 555-614 form the KH domain; the sequence is PTLLTLKINPDKIRDVIGKGGATIRALTEETGCTIDIEDDGSVKIYGETREKADEAVRRV. One can recognise an S1 motif domain in the interval 624-692; it reads GAIYEGKVTR…QRGRIKLSMK (69 aa).

Belongs to the polyribonucleotide nucleotidyltransferase family. Component of the RNA degradosome, which is a multiprotein complex involved in RNA processing and mRNA degradation. Mg(2+) serves as cofactor.

The protein localises to the cytoplasm. It catalyses the reaction RNA(n+1) + phosphate = RNA(n) + a ribonucleoside 5'-diphosphate. Involved in mRNA degradation. Catalyzes the phosphorolysis of single-stranded polyribonucleotides processively in the 3'- to 5'-direction. This chain is Polyribonucleotide nucleotidyltransferase, found in Alcanivorax borkumensis (strain ATCC 700651 / DSM 11573 / NCIMB 13689 / SK2).